We begin with the raw amino-acid sequence, 1068 residues long: Disheveled-associated activator of morphogenesis 2 (1068 aa).

Positions 40–416 constitute a GBD/FH3 domain; that stretch reads SPIPNAEELN…QIVLQDERGV (377 aa). A coiled-coil region spans residues 434 to 516; that stretch reads MLINENEVKQ…LVAQLSELST (83 aa). Positions 514–586 are disordered; sequence LSTGPVSSPP…MGLPLPQDPY (73 aa). Residues 518–594 enclose the FH1 domain; the sequence is PVSSPPPPGG…PYPSSDVPLR (77 aa). The span at 540-572 shows a compositional bias: pro residues; sequence LPPPPPPLPFACCPPPPPPPLPPGGPPTPPGAP. The FH2 domain occupies 595-994; it reads KKRVPQPSHP…EERRARMEAM (400 aa). Ser-1015 carries the post-translational modification Phosphoserine. A DAD domain is found at 1016-1048; it reads SLEEGGEFDDLVSALRSGEVFDKDLCKLKRSRK.

It belongs to the formin homology family. As to quaternary structure, interacts with DVL3. Interacts with INF2. Expressed in most tissues examined. Expressed in kidney glomeruli.

Its function is as follows. Key regulator of the Wnt signaling pathway, which is required for various processes during development, such as dorsal patterning, determination of left/right symmetry or myelination in the central nervous system. Acts downstream of Wnt ligands and upstream of beta-catenin (CTNNB1). Required for canonical Wnt signaling pathway during patterning in the dorsal spinal cord by promoting the aggregation of Disheveled (Dvl) complexes, thereby clustering and formation of Wnt receptor signalosomes and potentiating Wnt activity. During dorsal patterning of the spinal cord, inhibits oligodendrocytes differentiation via interaction with PIP5K1A. Also regulates non-canonical Wnt signaling pathway. Acts downstream of PITX2 in the developing gut and is required for left/right asymmetry within dorsal mesentery: affects mesenchymal condensation by lengthening cadherin-based junctions through WNT5A and non-canonical Wnt signaling, inducing polarized condensation in the left dorsal mesentery necessary to initiate gut rotation. Together with DAAM1, required for myocardial maturation and sarcomere assembly. Is a regulator of actin nucleation and elongation, filopodia formation and podocyte migration. This chain is Disheveled-associated activator of morphogenesis 2, found in Homo sapiens (Human).